Consider the following 246-residue polypeptide: tRNA pseudouridine synthase A (246 aa).

The active-site Nucleophile is the Asp-51. Residue Tyr-105 participates in substrate binding.

This sequence belongs to the tRNA pseudouridine synthase TruA family.

It carries out the reaction uridine(38/39/40) in tRNA = pseudouridine(38/39/40) in tRNA. Formation of pseudouridine at positions 38, 39 and 40 in the anticodon stem and loop of transfer RNAs. The polypeptide is tRNA pseudouridine synthase A (Thermoplasma volcanium (strain ATCC 51530 / DSM 4299 / JCM 9571 / NBRC 15438 / GSS1)).